The primary structure comprises 251 residues: 16S rRNA (guanine(1405)-N(7))-methyltransferase (251 aa).

S-adenosyl-L-methionine contacts are provided by residues tyrosine 56, 81–83, arginine 87, alanine 111, aspartate 131, 157–158, phenylalanine 173, and glutamate 182; these read HAS and DV.

This sequence belongs to the methyltransferase superfamily. Aminoglycoside resistance family.

It carries out the reaction guanosine(1405) in 16S rRNA + S-adenosyl-L-methionine = N(7)-methylguanosine(1405) in 16S rRNA + S-adenosyl-L-homocysteine. Functionally, specifically methylates the N(7) position of guanine 1405 in 16S rRNA. Confers resistance to various aminoglycosides, including kanamycin, tobramycin, amikacin, arbekacin, gentamicin, sisomicin and isepamicin. This is 16S rRNA (guanine(1405)-N(7))-methyltransferase (rmtB) from Serratia marcescens.